The following is a 732-amino-acid chain: X-ray repair cross-complementing protein 5 (732 aa).

Residues 9 to 161 (AVVLCVDVGV…CNLKKSGISL (153 aa)) enclose the VWFA domain. A leucine-zipper region spans residues 138–165 (LSSPFSQDQLDVIICNLKKSGISLQFFL). Lysine 195 participates in a covalent cross-link: Glycyl lysine isopeptide (Lys-Gly) (interchain with G-Cter in SUMO2). Residues 253 to 453 (IGPNLSIKIV…CTPTEAQLSA (201 aa)) form the Ku domain. A Phosphoserine modification is found at serine 258. Lysine 265 is subject to N6-acetyllysine. Position 318 is a phosphoserine (serine 318). N6-acetyllysine is present on lysine 332. Residues lysine 532 and lysine 534 each participate in a glycyl lysine isopeptide (Lys-Gly) (interchain with G-Cter in SUMO2) cross-link. Threonine 535 bears the Phosphothreonine mark. Residues lysine 567 and lysine 569 each participate in a glycyl lysine isopeptide (Lys-Gly) (interchain with G-Cter in SUMO2) cross-link. Serine 578, serine 580, and serine 581 each carry phosphoserine; by PRKDC. Position 666 is an N6-acetyllysine (lysine 666). Glycyl lysine isopeptide (Lys-Gly) (interchain with G-Cter in SUMO2) cross-links involve residues lysine 670 and lysine 689. Residues 708–732 (PKDKAKEDTTGPEEAGDVDDLLDMI) form a disordered region. Threonine 716 carries the phosphothreonine; by PRKDC modification. The span at 717–732 (TGPEEAGDVDDLLDMI) shows a compositional bias: acidic residues. The short motif at 720–728 (EEAGDVDDL) is the EEXXXDL motif element.

The protein belongs to the ku80 family. Heterodimer composed of XRCC5/Ku80 and XRCC6/Ku70. Component of the core long-range non-homologous end joining (NHEJ) complex (also named DNA-PK complex) composed of PRKDC, LIG4, XRCC4, XRCC6/Ku70, XRCC5/Ku86 and NHEJ1/XLF. Additional component of the NHEJ complex includes PAXX. Following autophosphorylation, PRKDC dissociates from DNA, leading to formation of the short-range NHEJ complex, composed of LIG4, XRCC4, XRCC6/Ku70, XRCC5/Ku86 and NHEJ1/XLF. The XRCC5-XRCC6 dimer also associates with NAA15, and this complex displays DNA binding activity towards the osteocalcin FGF response element (OCFRE). In addition, XRCC5 binds to the osteoblast-specific transcription factors MSX2 and RUNX2. Interacts with ELF3. Interacts with APLF (via KBM motif). The XRCC5/XRCC6 dimer associates in a DNA-dependent manner with APEX1. Identified in a complex with DEAF1 and XRCC6. Interacts with NR4A3; the DNA-dependent protein kinase complex DNA-PK phosphorylates and activates NR4A3 and prevents NR4A3 ubiquitinylation and degradation. Interacts with RNF138. Interacts with CYREN (via KBM motif). Interacts with WRN (via KBM motif). Interacts (via N-terminus) with HSF1 (via N-terminus); this interaction is direct and prevents XRCC5/XRCC6 heterodimeric binding and non-homologous end joining (NHEJ) repair activities induced by ionizing radiation (IR). Interacts with DHX9; this interaction occurs in a RNA-dependent manner. Part of the HDP-RNP complex composed of at least HEXIM1, PRKDC, XRCC5, XRCC6, paraspeckle proteins (SFPQ, NONO, PSPC1, RBM14, and MATR3) and NEAT1 RNA. Interacts with ERCC6. Interacts with ATF7. The XRCC5-XRCC6 dimer associates with ALKBH2. Interacts with TPRN; TPRN interacts with a number of DNA damage response proteins, is recruited to sites of DNA damage and may play a role in DNA damage repair. Interacts with ERCC6L2. In terms of processing, ADP-ribosylated by PARP3. Post-translationally, phosphorylated on serine residues. Phosphorylation by PRKDC may enhance helicase activity. Sumoylated. In terms of processing, ubiquitinated by RNF8 via 'Lys-48'-linked ubiquitination following DNA damage, leading to its degradation and removal from DNA damage sites. Ubiquitinated by RNF138, leading to remove the Ku complex from DNA breaks.

The protein localises to the nucleus. It localises to the nucleolus. Its subcellular location is the chromosome. Its function is as follows. Single-stranded DNA-dependent ATP-dependent helicase that plays a key role in DNA non-homologous end joining (NHEJ) by recruiting DNA-PK to DNA. Required for double-strand break repair and V(D)J recombination. Also has a role in chromosome translocation. The DNA helicase II complex binds preferentially to fork-like ends of double-stranded DNA in a cell cycle-dependent manner. It works in the 3'-5' direction. During NHEJ, the XRCC5-XRRC6 dimer performs the recognition step: it recognizes and binds to the broken ends of the DNA and protects them from further resection. Binding to DNA may be mediated by XRCC6. The XRCC5-XRRC6 dimer acts as a regulatory subunit of the DNA-dependent protein kinase complex DNA-PK by increasing the affinity of the catalytic subunit PRKDC to DNA by 100-fold. The XRCC5-XRRC6 dimer is probably involved in stabilizing broken DNA ends and bringing them together. The assembly of the DNA-PK complex to DNA ends is required for the NHEJ ligation step. The XRCC5-XRRC6 dimer probably also acts as a 5'-deoxyribose-5-phosphate lyase (5'-dRP lyase), by catalyzing the beta-elimination of the 5' deoxyribose-5-phosphate at an abasic site near double-strand breaks. XRCC5 probably acts as the catalytic subunit of 5'-dRP activity, and allows to 'clean' the termini of abasic sites, a class of nucleotide damage commonly associated with strand breaks, before such broken ends can be joined. The XRCC5-XRRC6 dimer together with APEX1 acts as a negative regulator of transcription. In association with NAA15, the XRCC5-XRRC6 dimer binds to the osteocalcin promoter and activates osteocalcin expression. As part of the DNA-PK complex, involved in the early steps of ribosome assembly by promoting the processing of precursor rRNA into mature 18S rRNA in the small-subunit processome. Binding to U3 small nucleolar RNA, recruits PRKDC and XRCC5/Ku86 to the small-subunit processome. Plays a role in the regulation of DNA virus-mediated innate immune response by assembling into the HDP-RNP complex, a complex that serves as a platform for IRF3 phosphorylation and subsequent innate immune response activation through the cGAS-STING pathway. The sequence is that of X-ray repair cross-complementing protein 5 (Xrcc5) from Mus musculus (Mouse).